The following is a 450-amino-acid chain: Phosphoglucosamine mutase (450 aa).

Serine 101 (phosphoserine intermediate) is an active-site residue. Serine 101, aspartate 241, aspartate 243, and aspartate 245 together coordinate Mg(2+). Residue serine 101 is modified to Phosphoserine.

It belongs to the phosphohexose mutase family. Mg(2+) serves as cofactor. Post-translationally, activated by phosphorylation.

The catalysed reaction is alpha-D-glucosamine 1-phosphate = D-glucosamine 6-phosphate. In terms of biological role, catalyzes the conversion of glucosamine-6-phosphate to glucosamine-1-phosphate. The protein is Phosphoglucosamine mutase of Listeria monocytogenes serotype 4b (strain F2365).